The primary structure comprises 318 residues: Thymidylate synthase (318 aa).

DUMP contacts are provided by residues R25 and 180–181 (RR). Residue C200 is the Nucleophile of the active site. Residues 220–223 (RSGD), N231, and 261–263 (HIY) contribute to the dUMP site. Residue D223 participates in (6R)-5,10-methylene-5,6,7,8-tetrahydrofolate binding. A317 contacts (6R)-5,10-methylene-5,6,7,8-tetrahydrofolate.

The protein belongs to the thymidylate synthase family. Bacterial-type ThyA subfamily. Homodimer.

Its subcellular location is the cytoplasm. It catalyses the reaction dUMP + (6R)-5,10-methylene-5,6,7,8-tetrahydrofolate = 7,8-dihydrofolate + dTMP. It participates in pyrimidine metabolism; dTTP biosynthesis. Catalyzes the reductive methylation of 2'-deoxyuridine-5'-monophosphate (dUMP) to 2'-deoxythymidine-5'-monophosphate (dTMP) while utilizing 5,10-methylenetetrahydrofolate (mTHF) as the methyl donor and reductant in the reaction, yielding dihydrofolate (DHF) as a by-product. This enzymatic reaction provides an intracellular de novo source of dTMP, an essential precursor for DNA biosynthesis. In Bacillus cereus (strain ATCC 14579 / DSM 31 / CCUG 7414 / JCM 2152 / NBRC 15305 / NCIMB 9373 / NCTC 2599 / NRRL B-3711), this protein is Thymidylate synthase.